Here is a 975-residue protein sequence, read N- to C-terminus: MASNNVAQFAAELKMPAGVLLEQLQAAGVQKASEDDALSETDKARLLDHLRKSHGATDGDKRKITLTRRHTSEIKQADATGKARTIQVEVRKKRTFVKRDDVSETGADQAQAQTDEQAEAELKRREEEARREAELLEKQAQELRERQERLEREEAERRAREEAAEAERRRAEEEAAAKRAAAAQAEAAQQAAAAREQAQRAQSEPAEQSAQDEARAAAERAAQREAAKKAEDAAREAADKARAEQEEIRKRREAAEAEARAIREMMNTPRRAQVKAVEPPKPAEPPAAKAAEAKGTLHKPAKPAGEAAAARPAAKKPASGAPAPAAAPAGDRTKKPGTGKSGWQDDAAKRRGIKTRGDSSGGVDRGWRGGPKGRGKHQDSASSFQAPTEPIVREVHVPETISVADLAHKMSIKASEVIKVMMKMGQMVTINQVLDQETAMIVVEELGHRALAAKLDDPEALLVEGEIGSDAEQLPRPPVVTVMGHVDHGKTSLLDYIRRAKVAAGEAGGITQHIGAYHVETPRGVVTFLDTPGHEAFTAMRARGAKATDIVILVVAADDGVMPQTKEAISHAKAGGVPIVVAINKIDKPEANPDRVKQELVAEGVVPEEYGGDSPFVPVSAKTGAGIDDLLENVLLQAEVLELKAPVESPAKGIVIEAKLDKGKGPVATVLVQSGTLSRGDVVLAGTAYGRVRAMLDENGKPTKEAGPSIPVEIQGLSEVPGAGEEVIVLPDERKAREIALFRQGKFRDVKLAKQQAAKLESMLEQMGEGEVQNLPLIIKADVQGSQEALVQSLLKLSTDEVRVQIVHSAVGGISESDVNLATASKAVIIGFNTRADAQARKLAEANGIDIRYYNIIYDAVDEVKAAMSGMLAPEKREVVTGMVEVRQVFKVPKVGTVAGCMVTDGVVKRSSSVRVLRNNVVIFTGELDSLKRFKDDVKEVKQGFECGMSLKNFNDIVEGDQFEVFEVTEVARTL.

The segment covering 48-63 (DHLRKSHGATDGDKRK) has biased composition (basic and acidic residues). Disordered stretches follow at residues 48 to 84 (DHLR…GKAR) and 96 to 388 (FVKR…QAPT). Positions 104 to 115 (ETGADQAQAQTD) are enriched in low complexity. Residues 120 to 177 (AELKRREEEARREAELLEKQAQELRERQERLEREEAERRAREEAAEAERRRAEEEAAA) are compositionally biased toward basic and acidic residues. The span at 178-211 (KRAAAAQAEAAQQAAAAREQAQRAQSEPAEQSAQ) shows a compositional bias: low complexity. Residues 212–263 (DEARAAAERAAQREAAKKAEDAAREAADKARAEQEEIRKRREAAEAEARAIR) are compositionally biased toward basic and acidic residues. Positions 302-330 (KPAGEAAAARPAAKKPASGAPAPAAAPAG) are enriched in low complexity. Residues 359-372 (SSGGVDRGWRGGPK) show a composition bias toward gly residues. Residues 475–644 (PRPPVVTVMG…LLQAEVLELK (170 aa)) enclose the tr-type G domain. Residues 484 to 491 (GHVDHGKT) are G1. 484-491 (GHVDHGKT) is a GTP binding site. Residues 509–513 (GITQH) form a G2 region. The G3 stretch occupies residues 530–533 (DTPG). GTP contacts are provided by residues 530–534 (DTPGH) and 584–587 (NKID). Positions 584 to 587 (NKID) are G4. The G5 stretch occupies residues 620–622 (SAK).

Belongs to the TRAFAC class translation factor GTPase superfamily. Classic translation factor GTPase family. IF-2 subfamily.

It localises to the cytoplasm. In terms of biological role, one of the essential components for the initiation of protein synthesis. Protects formylmethionyl-tRNA from spontaneous hydrolysis and promotes its binding to the 30S ribosomal subunits. Also involved in the hydrolysis of GTP during the formation of the 70S ribosomal complex. The sequence is that of Translation initiation factor IF-2 from Burkholderia pseudomallei (strain 1710b).